The primary structure comprises 764 residues: 5-methyltetrahydropteroyltriglutamate--homocysteine methyltransferase (764 aa).

Residues 16–19 and lysine 115 each bind 5-methyltetrahydropteroyltri-L-glutamate; that span reads RELK. L-homocysteine-binding positions include 435–437 and glutamate 488; that span reads IGS. L-methionine-binding positions include 435 to 437 and glutamate 488; that span reads IGS. 5-methyltetrahydropteroyltri-L-glutamate-binding positions include 519 to 520 and tryptophan 565; that span reads RC. Residue aspartate 603 participates in L-homocysteine binding. Aspartate 603 provides a ligand contact to L-methionine. Residue glutamate 609 coordinates 5-methyltetrahydropteroyltri-L-glutamate. 3 residues coordinate Zn(2+): histidine 645, cysteine 647, and glutamate 669. Catalysis depends on histidine 698, which acts as the Proton donor. Residue cysteine 730 coordinates Zn(2+).

It belongs to the vitamin-B12 independent methionine synthase family. It depends on Zn(2+) as a cofactor.

It carries out the reaction 5-methyltetrahydropteroyltri-L-glutamate + L-homocysteine = tetrahydropteroyltri-L-glutamate + L-methionine. The protein operates within amino-acid biosynthesis; L-methionine biosynthesis via de novo pathway; L-methionine from L-homocysteine (MetE route): step 1/1. In terms of biological role, catalyzes the transfer of a methyl group from 5-methyltetrahydrofolate to homocysteine resulting in methionine formation. The sequence is that of 5-methyltetrahydropteroyltriglutamate--homocysteine methyltransferase from Burkholderia pseudomallei (strain 1106a).